The sequence spans 150 residues: Large ribosomal subunit protein bL9 (150 aa).

Belongs to the bacterial ribosomal protein bL9 family.

In terms of biological role, binds to the 23S rRNA. This Burkholderia cenocepacia (strain HI2424) protein is Large ribosomal subunit protein bL9.